The chain runs to 476 residues: Aspartyl/glutamyl-tRNA(Asn/Gln) amidotransferase subunit B (476 aa).

It belongs to the GatB/GatE family. GatB subfamily. In terms of assembly, heterotrimer of A, B and C subunits.

It carries out the reaction L-glutamyl-tRNA(Gln) + L-glutamine + ATP + H2O = L-glutaminyl-tRNA(Gln) + L-glutamate + ADP + phosphate + H(+). The catalysed reaction is L-aspartyl-tRNA(Asn) + L-glutamine + ATP + H2O = L-asparaginyl-tRNA(Asn) + L-glutamate + ADP + phosphate + 2 H(+). Its function is as follows. Allows the formation of correctly charged Asn-tRNA(Asn) or Gln-tRNA(Gln) through the transamidation of misacylated Asp-tRNA(Asn) or Glu-tRNA(Gln) in organisms which lack either or both of asparaginyl-tRNA or glutaminyl-tRNA synthetases. The reaction takes place in the presence of glutamine and ATP through an activated phospho-Asp-tRNA(Asn) or phospho-Glu-tRNA(Gln). The chain is Aspartyl/glutamyl-tRNA(Asn/Gln) amidotransferase subunit B from Latilactobacillus sakei subsp. sakei (strain 23K) (Lactobacillus sakei subsp. sakei).